A 160-amino-acid polypeptide reads, in one-letter code: 6,7-dimethyl-8-ribityllumazine synthase (160 aa).

5-amino-6-(D-ribitylamino)uracil is bound by residues Trp-28, 59-61, and 82-84; these read SFE and VII. A (2S)-2-hydroxy-3-oxobutyl phosphate-binding site is contributed by 87 to 88; that stretch reads GT. The active-site Proton donor is His-90. Phe-115 is a binding site for 5-amino-6-(D-ribitylamino)uracil. Position 129 (Arg-129) interacts with (2S)-2-hydroxy-3-oxobutyl phosphate.

The protein belongs to the DMRL synthase family.

It catalyses the reaction (2S)-2-hydroxy-3-oxobutyl phosphate + 5-amino-6-(D-ribitylamino)uracil = 6,7-dimethyl-8-(1-D-ribityl)lumazine + phosphate + 2 H2O + H(+). It functions in the pathway cofactor biosynthesis; riboflavin biosynthesis; riboflavin from 2-hydroxy-3-oxobutyl phosphate and 5-amino-6-(D-ribitylamino)uracil: step 1/2. Catalyzes the formation of 6,7-dimethyl-8-ribityllumazine by condensation of 5-amino-6-(D-ribitylamino)uracil with 3,4-dihydroxy-2-butanone 4-phosphate. This is the penultimate step in the biosynthesis of riboflavin. This is 6,7-dimethyl-8-ribityllumazine synthase from Clavibacter sepedonicus (Clavibacter michiganensis subsp. sepedonicus).